We begin with the raw amino-acid sequence, 452 residues long: Probable ECA polymerase (452 aa).

The next 11 membrane-spanning stretches (helical) occupy residues 6-26 (FSGLLVVWLLSTLFIATLTWF), 37-57 (VFFSLLFLLTFFFGFPLTSVL), 63-83 (VGVAPPEILLQALLSAACFYG), 118-138 (VILMGIALVSVAIFFMHNGFL), 155-175 (GVALKRFFYFFIPAMLVVYFL), 181-201 (AWLFFLVSTVAFGLLTYMIVG), 207-227 (IIIAFAIFLFIGIIRGWISLW), 228-248 (MLAAAGVLGIVGMFWLALKRY), 341-361 (LVVMGGALFIPLGAIVVGMII), 378-398 (YKAAILHSFCFGAIFNMIVLA), and 410-430 (VFFLVVFGASLLVAKLLFWLF).

The protein belongs to the WzyE family. In terms of assembly, probably part of a complex composed of WzxE, WzyE and WzzE.

It localises to the cell inner membrane. It functions in the pathway bacterial outer membrane biogenesis; enterobacterial common antigen biosynthesis. Probably involved in the polymerization of enterobacterial common antigen (ECA) trisaccharide repeat units. This is Probable ECA polymerase from Salmonella newport (strain SL254).